Here is a 156-residue protein sequence, read N- to C-terminus: Ribonuclease H (156 aa).

Residues glutamine 7–isoleucine 148 enclose the RNase H type-1 domain. 4 residues coordinate Mg(2+): aspartate 16, glutamate 54, aspartate 76, and aspartate 140.

The protein belongs to the RNase H family. Monomer. Mg(2+) serves as cofactor.

The protein localises to the cytoplasm. The catalysed reaction is Endonucleolytic cleavage to 5'-phosphomonoester.. Functionally, endonuclease that specifically degrades the RNA of RNA-DNA hybrids. The polypeptide is Ribonuclease H (rnhA) (Zymomonas mobilis subsp. mobilis (strain ATCC 31821 / ZM4 / CP4)).